The sequence spans 364 residues: Aminomethyltransferase (364 aa).

It belongs to the GcvT family. In terms of assembly, the glycine cleavage system is composed of four proteins: P, T, L and H.

The catalysed reaction is N(6)-[(R)-S(8)-aminomethyldihydrolipoyl]-L-lysyl-[protein] + (6S)-5,6,7,8-tetrahydrofolate = N(6)-[(R)-dihydrolipoyl]-L-lysyl-[protein] + (6R)-5,10-methylene-5,6,7,8-tetrahydrofolate + NH4(+). Functionally, the glycine cleavage system catalyzes the degradation of glycine. This chain is Aminomethyltransferase, found in Shewanella baltica (strain OS195).